Reading from the N-terminus, the 550-residue chain is Glucose-6-phosphate isomerase (550 aa).

Glutamate 356 acts as the Proton donor in catalysis. Residues histidine 387 and lysine 515 contribute to the active site.

This sequence belongs to the GPI family.

The protein resides in the cytoplasm. It carries out the reaction alpha-D-glucose 6-phosphate = beta-D-fructose 6-phosphate. Its pathway is carbohydrate biosynthesis; gluconeogenesis. The protein operates within carbohydrate degradation; glycolysis; D-glyceraldehyde 3-phosphate and glycerone phosphate from D-glucose: step 2/4. In terms of biological role, catalyzes the reversible isomerization of glucose-6-phosphate to fructose-6-phosphate. The chain is Glucose-6-phosphate isomerase from Vibrio atlanticus (strain LGP32) (Vibrio splendidus (strain Mel32)).